Consider the following 690-residue polypeptide: Elongation factor G (690 aa).

The tr-type G domain occupies aspartate 8–leucine 282. GTP contacts are provided by residues alanine 17–threonine 24, aspartate 81–histidine 85, and asparagine 135–aspartate 138.

This sequence belongs to the TRAFAC class translation factor GTPase superfamily. Classic translation factor GTPase family. EF-G/EF-2 subfamily.

Its subcellular location is the cytoplasm. Its function is as follows. Catalyzes the GTP-dependent ribosomal translocation step during translation elongation. During this step, the ribosome changes from the pre-translocational (PRE) to the post-translocational (POST) state as the newly formed A-site-bound peptidyl-tRNA and P-site-bound deacylated tRNA move to the P and E sites, respectively. Catalyzes the coordinated movement of the two tRNA molecules, the mRNA and conformational changes in the ribosome. The sequence is that of Elongation factor G from Caldanaerobacter subterraneus subsp. tengcongensis (strain DSM 15242 / JCM 11007 / NBRC 100824 / MB4) (Thermoanaerobacter tengcongensis).